We begin with the raw amino-acid sequence, 180 residues long: Cytokinin-beta-glucosidase (180 aa).

As to expression, accumulates in young leaves and shoot tips.

Functionally, hydrolyzes cytokinin glucosides thus liberating free cytokinins. This chain is Cytokinin-beta-glucosidase (TROLC), found in Nicotiana tabacum (Common tobacco).